The chain runs to 455 residues: Peroxisomal membrane protein PEX3 (455 aa).

Residues 113-125 (TVLSDDFSTSQEG) show a composition bias toward polar residues. Residues 113–135 (TVLSDDFSTSQEGAISEDTNKPP) form a disordered region. A helical membrane pass occupies residues 155 to 171 (FLTLIYCESLLIVFLHL).

It belongs to the peroxin-3 family. In terms of assembly, component of the peroxisomal docking complex, composed of at least PEX3, PEX13, PEX14 and PEX17. Component of the peroxisomal translocation complex, composed of at least PEX3, PEX2, PEX10 and PEX12. Interacts with PEX19. Interacts with the pexophagy receptor ATG30.

It is found in the peroxisome membrane. Functionally, peroxisomal membrane protein required for peroxisome biosynthesis. Shared component of both the peroxisomal docking complex and the peroxisomal translocation complex. The two types of peroxisomal matrix targeting signals, PTS1 and PTS2, are first recognized in the cytosol by their receptors PEX5 and PEX7, respectively, which then carry the cargo to the peroxisomal membrane. The peroxisomal targeting signal (PTS) receptor-cargo complexes interact with peroxisomal membrane protein (PMP) components of the docking complex. They have then additional downstream interactions with the translocation complex, leading to the transport of fully folded and oligomerized cargo into the peroxisome matrix. PEX3 acts as an anchoring site for PEX19 on the peroxisomal membrane and thus plays a crucial role in the assembly of the peroxisomal translocation complex. Is also essential for the interaction between the two complexes. Finally. PEX3 activates selective autophagy of peroxisomes (pexophagy) via interaction with the pexophagy receptor ATG30. This chain is Peroxisomal membrane protein PEX3, found in Komagataella pastoris (Yeast).